The chain runs to 373 residues: Cobalt-precorrin-5B C(1)-methyltransferase (373 aa).

This sequence belongs to the CbiD family.

The enzyme catalyses Co-precorrin-5B + S-adenosyl-L-methionine = Co-precorrin-6A + S-adenosyl-L-homocysteine. Its pathway is cofactor biosynthesis; adenosylcobalamin biosynthesis; cob(II)yrinate a,c-diamide from sirohydrochlorin (anaerobic route): step 6/10. In terms of biological role, catalyzes the methylation of C-1 in cobalt-precorrin-5B to form cobalt-precorrin-6A. This chain is Cobalt-precorrin-5B C(1)-methyltransferase, found in Polaromonas sp. (strain JS666 / ATCC BAA-500).